We begin with the raw amino-acid sequence, 456 residues long: Cysteine--tRNA ligase (456 aa).

Cysteine 28 lines the Zn(2+) pocket. The 'HIGH' region motif lies at 30-40; the sequence is ITVYDHCHLGH. Positions 209, 234, and 238 each coordinate Zn(2+). Positions 266 to 270 match the 'KMSKS' region motif; that stretch reads KMAKS. Residue lysine 269 coordinates ATP.

This sequence belongs to the class-I aminoacyl-tRNA synthetase family. In terms of assembly, monomer. Requires Zn(2+) as cofactor.

Its subcellular location is the cytoplasm. It catalyses the reaction tRNA(Cys) + L-cysteine + ATP = L-cysteinyl-tRNA(Cys) + AMP + diphosphate. This is Cysteine--tRNA ligase from Legionella pneumophila (strain Paris).